The primary structure comprises 119 residues: Holo-[acyl-carrier-protein] synthase (119 aa).

2 residues coordinate Mg(2+): Asp-8 and Glu-58.

Belongs to the P-Pant transferase superfamily. AcpS family. The cofactor is Mg(2+).

It localises to the cytoplasm. It carries out the reaction apo-[ACP] + CoA = holo-[ACP] + adenosine 3',5'-bisphosphate + H(+). Functionally, transfers the 4'-phosphopantetheine moiety from coenzyme A to a Ser of acyl-carrier-protein. The sequence is that of Holo-[acyl-carrier-protein] synthase from Streptococcus suis (strain 05ZYH33).